A 162-amino-acid chain; its full sequence is Necrosis-inducing secreted protein 1 (162 aa).

The signal sequence occupies residues 1-19; it reads MQFLTSLAAAASLVSLASA. Residues N88, N126, N133, and N150 are each glycosylated (N-linked (GlcNAc...) asparagine). The segment at 103-132 is BAK1/SERK3-binding; that stretch reads EYVIAASLFSLYGASSSPTVSNYNVTVNVG.

The protein belongs to the NIS1 effector family. As to quaternary structure, interacts with the host pattern recognition receptor (PRR)-associated kinases BAK1/SERK3, BKK1/SERK4 and BIK1.

The protein resides in the secreted. It localises to the host cytoplasm. Functionally, secreted effector that induces necrotic lesions in Nicotiana benthamiana. Interacts with the host receptor-like kinases (RLKs) BAK1/SERK3 and BKK1/SERK4, inhibits their kinase activity and suppresses INF1-induced pathogen-associated molecular pattern (PAMP)-triggered immunity (PTI) in N.benthamiana. Also interacts with the host receptor-like cytoplasmic kinase (RLCK) BIK1 and inhibits its kinase activity, thereby inhibiting PAMP-induced ROS generation. In PTI, phosphorylation relaying by RLKs and RLCKs is critical for the initiation of downstream signaling. This is Necrosis-inducing secreted protein 1 from Colletotrichum orbiculare (strain 104-T / ATCC 96160 / CBS 514.97 / LARS 414 / MAFF 240422) (Cucumber anthracnose fungus).